The chain runs to 693 residues: MA3 DOMAIN-CONTAINING TRANSLATION REGULATORY FACTOR 2 (693 aa).

Positions 25–60 (SLDPLPQANMAEDLTKSRRHSPIKVEGSEETWGVED) are disordered. In terms of domain architecture, MI 1 spans 90 to 211 (EYKKKATVIV…PPAFLKKQMK (122 aa)). Positions 241–248 (EKRWGGTD) match the Nuclear localization signal 1 motif. 3 consecutive MI domains span residues 254–375 (DVKA…SLSA), 389–510 (VFKD…EVLN), and 560–681 (EVKE…EDSQ). The Nuclear localization signal 2 signature appears at 430 to 437 (VKYLITLA). A disordered region spans residues 673–693 (ESFASEDSQSKKQNGSSSSSG). Positions 683–693 (KKQNGSSSSSG) are enriched in low complexity.

It belongs to the PDCD4 family. As to quaternary structure, binds to EIF4A1. The association with ribosomes is modulated by cellular energy status and TOR activity. In terms of tissue distribution, mostly expressed in reproductive tissues, such as flower buds and flowers, and, to a lower extent, in vegetative tissues, such as leaves, roots and stems.

Its subcellular location is the nucleus. It localises to the cytoplasm. The protein localises to the cytosol. In terms of biological role, involved in target of rapamycin (TOR)-regulated translation control, especially under energy-deficient conditions. This chain is MA3 DOMAIN-CONTAINING TRANSLATION REGULATORY FACTOR 2, found in Arabidopsis thaliana (Mouse-ear cress).